A 179-amino-acid chain; its full sequence is Large ribosomal subunit protein uL5 (179 aa).

Belongs to the universal ribosomal protein uL5 family. As to quaternary structure, part of the 50S ribosomal subunit; part of the 5S rRNA/L5/L18/L25 subcomplex. Contacts the 5S rRNA and the P site tRNA. Forms a bridge to the 30S subunit in the 70S ribosome.

Its function is as follows. This is one of the proteins that bind and probably mediate the attachment of the 5S RNA into the large ribosomal subunit, where it forms part of the central protuberance. In the 70S ribosome it contacts protein S13 of the 30S subunit (bridge B1b), connecting the 2 subunits; this bridge is implicated in subunit movement. Contacts the P site tRNA; the 5S rRNA and some of its associated proteins might help stabilize positioning of ribosome-bound tRNAs. The polypeptide is Large ribosomal subunit protein uL5 (Staphylococcus saprophyticus subsp. saprophyticus (strain ATCC 15305 / DSM 20229 / NCIMB 8711 / NCTC 7292 / S-41)).